A 523-amino-acid polypeptide reads, in one-letter code: Jerky protein homolog-like (523 aa).

In terms of domain architecture, HTH psq-type spans 1 to 52; it reads MSGKRKRVVLTIKDKLDIIKKLEDGGSSKQLAVIYGIGETTVRDIRKNKEKI. 2 consecutive DNA-binding regions (H-T-H motif) follow at residues 28-48 and 100-132; these read SKQL…IRKN and PICA…FKQR. Positions 67–139 constitute an HTH CENPB-type domain; sequence KRKSMKPSMY…KQRHSIREIN (73 aa). Residues 168–385 form the DDE-1 domain; sequence LQPEQIYNAD…VKPVTISRAW (218 aa).

It belongs to the tigger transposable element derived protein family.

It is found in the nucleus. This is Jerky protein homolog-like (Jrkl) from Mus musculus (Mouse).